Reading from the N-terminus, the 931-residue chain is Scaffold attachment factor B1 (931 aa).

The segment covering 1–24 (MAETLSGLGDSGAASAAAVSSAAS) has biased composition (low complexity). The disordered stretch occupies residues 1-35 (MAETLSGLGDSGAASAAAVSSAASETGTRRLSDLR). At Ala-2 the chain carries N-acetylalanine. Phosphoserine is present on residues Ser-24 and Ser-55. An SAP domain is found at 31–65 (LSDLRVIDLRAELRKRNLTSSGNKSVLMERLKKAI). Positions 64–121 (AIEEEGGNPDEIEVISEGNKKMPKRPSKGKKPEDEGVEDNGLEENSGDGQEDVETSLE) are disordered. Over residues 67 to 77 (EEGGNPDEIEV) the composition is skewed to acidic residues. The residue at position 79 (Ser-79) is a Phosphoserine. Over residues 98 to 118 (EGVEDNGLEENSGDGQEDVET) the composition is skewed to acidic residues. Residues Lys-171 and Lys-185 each participate in a glycyl lysine isopeptide (Lys-Gly) (interchain with G-Cter in SUMO2) cross-link. Phosphoserine occurs at positions 194, 196, and 208. Disordered regions lie at residues 205–304 (EEAS…TRCQ) and 316–430 (KREP…GRNF). The segment covering 224–233 (CKSEPVKEEG) has biased composition (basic and acidic residues). Residue Lys-230 forms a Glycyl lysine isopeptide (Lys-Gly) (interchain with G-Cter in SUMO) linkage. Residues 267 to 287 (EEEEEEEEEEEQEEEQEEEGD) are compositionally biased toward acidic residues. Residue Lys-316 forms a Glycyl lysine isopeptide (Lys-Gly) (interchain with G-Cter in SUMO) linkage. Over residues 341-356 (EQSSTAAQLPETTSQE) the composition is skewed to polar residues. Residues 368 to 380 (EPRDSKDDVKKFA) show a composition bias toward basic and acidic residues. Residue Lys-403 forms a Glycyl lysine isopeptide (Lys-Gly) (interchain with G-Cter in SUMO2) linkage. 2 positions are modified to phosphoserine: Ser-405 and Ser-406. Residues 412-423 (DTKRLSREEKGR) are compositionally biased toward basic and acidic residues. Residue Lys-414 forms a Glycyl lysine isopeptide (Lys-Gly) (interchain with G-Cter in SUMO2) linkage. Residues 428 to 506 (RNFWVSGLSS…KMISVEKAKS (79 aa)) form the RRM domain. The residue at position 437 (Ser-437) is a Phosphoserine. 2 stretches are compositionally biased toward basic and acidic residues: residues 500–573 (SVEK…ERSR) and 581–592 (GTERTVVMDKSK). Disordered regions lie at residues 500-663 (SVEK…WERE), 691-720 (RLER…LRRQ), 759-843 (RYHS…PRRD), and 872-931 (RWQG…QQTQ). Residues Lys-505, Lys-536, Lys-565, and Lys-592 each participate in a glycyl lysine isopeptide (Lys-Gly) (interchain with G-Cter in SUMO2) cross-link. The interaction with POLR2A; SFRS1; SFRS9 and SFRS10 stretch occupies residues 550 to 816 (TDDGSTEKSK…RHGGPERHGR (267 aa)). Lys-600 is covalently cross-linked (Glycyl lysine isopeptide (Lys-Gly) (interchain with G-Cter in SUMO1); alternate). Lys-600 participates in a covalent cross-link: Glycyl lysine isopeptide (Lys-Gly) (interchain with G-Cter in SUMO2); alternate. A phosphoserine mark is found at Ser-602, Ser-604, Ser-623, and Ser-626. Residues 603–663 (GSKERASKSQ…QRLQAQWERE (61 aa)) show a composition bias toward basic and acidic residues. The short motif at 621–638 (KRSVVSFDKVKESRKSRD) is the Nuclear localization signal element. Lys-629 is modified (N6-acetyllysine). Residues 759–820 (RYHSDFSRQD…PERHGRDSRD (62 aa)) show a composition bias toward basic and acidic residues. Omega-N-methylarginine is present on Arg-834. Arg-892, Arg-898, Arg-908, and Arg-914 each carry asymmetric dimethylarginine.

In terms of assembly, monomer and homodimer. Interacts with KHDRBS3. Interacts with CLK2. Interacts with POLR2A, ASF/SRSF1, SRp30c/SRFS9 and TRA2B/SFRS10. Interacts with SRPK1 and inhibits its activity. Interacts with RBMX. Interacts with FUS. Interacts with ZBED4. In terms of processing, phosphorylated by CDC-like kinase 2 (CLK2). Sumoylated by PIAS1 with SUMO1 and SUMO2/3, desumoylated by SENP1. Sumoylation is required for transcriptional repressor activity.

Its subcellular location is the nucleus. Its function is as follows. Binds to scaffold/matrix attachment region (S/MAR) DNA and forms a molecular assembly point to allow the formation of a 'transcriptosomal' complex (consisting of SR proteins and RNA polymerase II) coupling transcription and RNA processing. Functions as an estrogen receptor corepressor and can also bind to the HSP27 promoter and decrease its transcription. Thereby acts as a negative regulator of cell proliferation. When associated with RBMX, binds to and stimulates transcription from the SREBF1 promoter. The chain is Scaffold attachment factor B1 (Safb) from Rattus norvegicus (Rat).